The following is a 209-amino-acid chain: Urease accessory protein UreG (209 aa).

Residue 18–25 coordinates GTP; it reads GPVGSGKT.

This sequence belongs to the SIMIBI class G3E GTPase family. UreG subfamily. As to quaternary structure, homodimer. UreD, UreF and UreG form a complex that acts as a GTP-hydrolysis-dependent molecular chaperone, activating the urease apoprotein by helping to assemble the nickel containing metallocenter of UreC. The UreE protein probably delivers the nickel.

Its subcellular location is the cytoplasm. Its function is as follows. Facilitates the functional incorporation of the urease nickel metallocenter. This process requires GTP hydrolysis, probably effectuated by UreG. This is Urease accessory protein UreG from Cupriavidus pinatubonensis (strain JMP 134 / LMG 1197) (Cupriavidus necator (strain JMP 134)).